A 154-amino-acid chain; its full sequence is Hexachlorocyclohexane dehydrochlorinase 1 (154 aa).

Residue aspartate 25 is part of the active site. The Proton acceptor role is filled by histidine 73.

This sequence belongs to the HCH dehydrochlorinase family. As to quaternary structure, homotrimer.

Its subcellular location is the periplasm. It catalyses the reaction gamma-hexachlorocyclohexane = (3R,4S,5S,6R)-pentachlorocyclohexene + chloride + H(+). The catalysed reaction is (3R,4S,5S,6R)-pentachlorocyclohexene = (3R,6R)-1,3,4,6-tetrachlorocyclohexa-1,4-diene + chloride + H(+). Its pathway is xenobiotic degradation; hexachlorocyclohexane degradation. Functionally, catalyzes the conversion of the important environmental pollutant gamma-hexachlorocyclohexane (gamma-HCH or lindane) to 1,3,4,6-tetrachloro-1,4-cyclohexadiene (1,4-TCDN) via gamma-pentachlorocyclohexene (gamma-PCCH). Proceeds by two successive 1,2-anti conformationally dependent dehydrochlorinations. Also shows activity with alpha- and delta-HCH, giving alpha- and delta-PCCH respectively, but not with the beta isomer. The polypeptide is Hexachlorocyclohexane dehydrochlorinase 1 (Sphingobium indicum (strain DSM 16412 / CCM 7286 / MTCC 6364 / B90A)).